A 109-amino-acid polypeptide reads, in one-letter code: Putative double-stranded DNA mimic protein YciU (109 aa).

It belongs to the putative dsDNA mimic protein family.

Its function is as follows. May act as a double-stranded DNA (dsDNA) mimic. Probably regulates the activity of a dsDNA-binding protein. This Escherichia coli O45:K1 (strain S88 / ExPEC) protein is Putative double-stranded DNA mimic protein YciU.